Here is a 129-residue protein sequence, read N- to C-terminus: Small ribosomal subunit protein uS9 (129 aa).

This sequence belongs to the universal ribosomal protein uS9 family.

The polypeptide is Small ribosomal subunit protein uS9 (rps9) (Thermoplasma acidophilum (strain ATCC 25905 / DSM 1728 / JCM 9062 / NBRC 15155 / AMRC-C165)).